A 161-amino-acid chain; its full sequence is Cytochrome b6-f complex subunit 4 (161 aa).

Transmembrane regions (helical) follow at residues 37–57 (LLYI…GLAV), 96–116 (LLGV…PFIE), and 132–152 (TVFL…TFPI).

Belongs to the cytochrome b family. PetD subfamily. The 4 large subunits of the cytochrome b6-f complex are cytochrome b6, subunit IV (17 kDa polypeptide, PetD), cytochrome f and the Rieske protein, while the 4 small subunits are PetG, PetL, PetM and PetN. The complex functions as a dimer.

Its subcellular location is the cellular thylakoid membrane. Its function is as follows. Component of the cytochrome b6-f complex, which mediates electron transfer between photosystem II (PSII) and photosystem I (PSI), cyclic electron flow around PSI, and state transitions. The protein is Cytochrome b6-f complex subunit 4 of Cyanothece sp. (strain PCC 7425 / ATCC 29141).